Here is a 152-residue protein sequence, read N- to C-terminus: SsrA-binding protein (152 aa).

The span at 132 to 142 shows a compositional bias: basic and acidic residues; sequence REAIKKRDVSD. The interval 132 to 152 is disordered; that stretch reads REAIKKRDVSDQIRSSLRRSR.

This sequence belongs to the SmpB family.

It localises to the cytoplasm. Required for rescue of stalled ribosomes mediated by trans-translation. Binds to transfer-messenger RNA (tmRNA), required for stable association of tmRNA with ribosomes. tmRNA and SmpB together mimic tRNA shape, replacing the anticodon stem-loop with SmpB. tmRNA is encoded by the ssrA gene; the 2 termini fold to resemble tRNA(Ala) and it encodes a 'tag peptide', a short internal open reading frame. During trans-translation Ala-aminoacylated tmRNA acts like a tRNA, entering the A-site of stalled ribosomes, displacing the stalled mRNA. The ribosome then switches to translate the ORF on the tmRNA; the nascent peptide is terminated with the 'tag peptide' encoded by the tmRNA and targeted for degradation. The ribosome is freed to recommence translation, which seems to be the essential function of trans-translation. The chain is SsrA-binding protein from Bdellovibrio bacteriovorus (strain ATCC 15356 / DSM 50701 / NCIMB 9529 / HD100).